A 412-amino-acid polypeptide reads, in one-letter code: Serine hydroxymethyltransferase (412 aa).

(6S)-5,6,7,8-tetrahydrofolate contacts are provided by residues Leu117 and Gly121–Leu123. Lys226 carries the post-translational modification N6-(pyridoxal phosphate)lysine. (6S)-5,6,7,8-tetrahydrofolate contacts are provided by residues Glu242 and Ser350–Phe352.

Belongs to the SHMT family. As to quaternary structure, homodimer. Pyridoxal 5'-phosphate serves as cofactor.

The protein resides in the cytoplasm. It carries out the reaction (6R)-5,10-methylene-5,6,7,8-tetrahydrofolate + glycine + H2O = (6S)-5,6,7,8-tetrahydrofolate + L-serine. Its pathway is one-carbon metabolism; tetrahydrofolate interconversion. It participates in amino-acid biosynthesis; glycine biosynthesis; glycine from L-serine: step 1/1. In terms of biological role, catalyzes the reversible interconversion of serine and glycine with tetrahydrofolate (THF) serving as the one-carbon carrier. Also exhibits THF-independent aldolase activity toward beta-hydroxyamino acids, producing glycine and aldehydes, via a retro-aldol mechanism. The chain is Serine hydroxymethyltransferase from Methanosarcina mazei (strain ATCC BAA-159 / DSM 3647 / Goe1 / Go1 / JCM 11833 / OCM 88) (Methanosarcina frisia).